The chain runs to 147 residues: UPF0260 protein Ent638_2368 (147 aa).

The protein belongs to the UPF0260 family.

This Enterobacter sp. (strain 638) protein is UPF0260 protein Ent638_2368.